The following is a 637-amino-acid chain: Phosphomethylpyrimidine synthase (637 aa).

Substrate contacts are provided by residues N242, M271, Y300, H336, 356 to 358 (SRG), 397 to 400 (DGLR), and E436. H440 contacts Zn(2+). Y463 contacts substrate. H504 contributes to the Zn(2+) binding site. [4Fe-4S] cluster is bound by residues C584, C587, and C592.

It belongs to the ThiC family. Homodimer. Requires [4Fe-4S] cluster as cofactor.

The enzyme catalyses 5-amino-1-(5-phospho-beta-D-ribosyl)imidazole + S-adenosyl-L-methionine = 4-amino-2-methyl-5-(phosphooxymethyl)pyrimidine + CO + 5'-deoxyadenosine + formate + L-methionine + 3 H(+). It participates in cofactor biosynthesis; thiamine diphosphate biosynthesis. Functionally, catalyzes the synthesis of the hydroxymethylpyrimidine phosphate (HMP-P) moiety of thiamine from aminoimidazole ribotide (AIR) in a radical S-adenosyl-L-methionine (SAM)-dependent reaction. This Bordetella bronchiseptica (strain ATCC BAA-588 / NCTC 13252 / RB50) (Alcaligenes bronchisepticus) protein is Phosphomethylpyrimidine synthase.